The sequence spans 274 residues: Putative ABC transporter ATP-binding protein MM_1037 (274 aa).

The region spanning 2-235 is the ABC transporter domain; it reads IRLENVSYCY…PSLKDLGLTP (234 aa). 35–42 contributes to the ATP binding site; sequence GRNGSGKS.

This sequence belongs to the ABC transporter superfamily.

The protein localises to the cell membrane. Probably part of an ABC transporter complex. Responsible for energy coupling to the transport system. The sequence is that of Putative ABC transporter ATP-binding protein MM_1037 from Methanosarcina mazei (strain ATCC BAA-159 / DSM 3647 / Goe1 / Go1 / JCM 11833 / OCM 88) (Methanosarcina frisia).